A 1331-amino-acid polypeptide reads, in one-letter code: Mitogen-activated protein kinase kinase kinase 15 (1331 aa).

Gly residues predominate over residues 1–13 (MEGGGGSGGGGGP). Residues 1 to 61 (MEGGGGSGGG…GEAEGGRGPR (61 aa)) form a disordered region. The Protein kinase domain maps to 656–912 (NGERVVLGKG…AADLLQEGFL (257 aa)). ATP is bound by residues 662 to 670 (LGKGSYGIV) and K685. D777 (proton acceptor) is an active-site residue. Disordered stretches follow at residues 934–964 (GTGTLALPSSGELVGSSSSEHGSISPDSDAQ) and 983–1005 (LSVPDESPALDDRSTALPPEERD). A compositionally biased stretch (low complexity) spans 940–962 (LPSSGELVGSSSSEHGSISPDSD). Basic and acidic residues predominate over residues 992-1005 (LDDRSTALPPEERD). Residues 1216-1236 (LVQKEREYQNLLRLILDQKTQ) are a coiled coil.

The protein belongs to the protein kinase superfamily. STE Ser/Thr protein kinase family. MAP kinase kinase kinase subfamily. The cofactor is Mg(2+).

The enzyme catalyses L-seryl-[protein] + ATP = O-phospho-L-seryl-[protein] + ADP + H(+). It carries out the reaction L-threonyl-[protein] + ATP = O-phospho-L-threonyl-[protein] + ADP + H(+). Its activity is regulated as follows. Contains an N-terminal autoinhibitory domain. Activated by phosphorylation at Thr-816, inhibited by phosphorylation at Ser-928. Serine/threonine kinase which acts as a component of the MAP kinase signal transduction pathway. Once activated, acts as an upstream activator of the p38 MAPK signal transduction cascade through the phosphorylation and activation of several MAP kinase kinases. May function in a signal transduction pathway that is activated by various cell stresses and leads to apoptosis. Involved in phosphorylation of WNK4 in response to osmotic stress or hypotonic low-chloride stimulation via the p38 MAPK signal transduction cascade. This chain is Mitogen-activated protein kinase kinase kinase 15, found in Mus musculus (Mouse).